The primary structure comprises 278 residues: MIALDQHLTEHKKDITQQWLEVCTSNGSWLYSAKDQQKLEQKLKDQHELLVTIVAKSLRKEDVEDELNRWSLQCARDRAVHEVTVTQSVGQFNTFRHIMFEWIHKFSEASSQDISIQEFYEWSRILNQNIDEIIEVFTEEYHQVTMIQLNAQKEMINELSAPIMPITDGIGILPLVGEIDTHRARTILESVLEQCSALKLSYLFLDISGVPIVDTMVAYQIFKVIDSTKLLGIETIISGIRPEIAQTVVKLGLDFSNVKTEQSLAKALANKGFKIKEC.

Residues 160-271 form the STAS domain; the sequence is SAPIMPITDG…QSLAKALANK (112 aa). T181 carries the post-translational modification Phosphothreonine.

Probably present in the stressosome with RsbRA, RsbRB, RsbRC and RsbS. Post-translationally, phosphorylated by RsbT.

Its function is as follows. One of 4 functionally non-identical RsbR paralogs, it functions in the environmental signaling branch of the general stress response. Functionally, negative regulator of sigma-B activity. Non-phosphorylated RsbS binds to RsbT, preventing its association with RsbU. Requires any one of RsbRA, RsbRB, RsbRC or RsbRD to sequester RsbT. When RsbS and the RsbR paralog(s) are phosphorylated, they release RsbT, which can then bind and activate RsbU. The polypeptide is RsbT co-antagonist protein RsbRD (rsbRD) (Bacillus subtilis (strain 168)).